A 140-amino-acid polypeptide reads, in one-letter code: Small ribosomal subunit protein uS12 (140 aa).

Positions 1–44 (MPTFNQLVRKGRKTMEKNSQAPALQKGFNSLRKKTTDASAPQKR) are disordered. Asp-102 is subject to 3-methylthioaspartic acid. The disordered stretch occupies residues 120 to 140 (VAKRRQARSKYGAKRPKEAKK). The span at 121 to 140 (AKRRQARSKYGAKRPKEAKK) shows a compositional bias: basic residues.

The protein belongs to the universal ribosomal protein uS12 family. As to quaternary structure, part of the 30S ribosomal subunit. Contacts proteins S8 and S17. May interact with IF1 in the 30S initiation complex.

Functionally, with S4 and S5 plays an important role in translational accuracy. Interacts with and stabilizes bases of the 16S rRNA that are involved in tRNA selection in the A site and with the mRNA backbone. Located at the interface of the 30S and 50S subunits, it traverses the body of the 30S subunit contacting proteins on the other side and probably holding the rRNA structure together. The combined cluster of proteins S8, S12 and S17 appears to hold together the shoulder and platform of the 30S subunit. The sequence is that of Small ribosomal subunit protein uS12 from Lachnoclostridium phytofermentans (strain ATCC 700394 / DSM 18823 / ISDg) (Clostridium phytofermentans).